The chain runs to 382 residues: Probable G-protein coupled receptor 132 (382 aa).

Over 1–42 (MRSEPTNAAGNTTLGVTSVLQSTSVPSSETCHVSYEESRVVL) the chain is Extracellular. Asn11 is a glycosylation site (N-linked (GlcNAc...) asparagine). A helical transmembrane segment spans residues 43-65 (VVVYSAVCLLGLPANCLTAWLTL). The Cytoplasmic segment spans residues 66–76 (LQVLQRNVLAV). A helical transmembrane segment spans residues 77 to 99 (YLFCLSLCELLYISTVPLWIIYI). Residues 100–113 (QNQHKWNLGPQACK) lie on the Extracellular side of the membrane. A disulfide bridge links Cys112 with Cys184. The helical transmembrane segment at 114-135 (VTAYIFFCNIYISILLLCCISC) threads the bilayer. Residues 136 to 155 (DRYMAVVYALESRGHRHQRT) lie on the Cytoplasmic side of the membrane. A helical transmembrane segment spans residues 156-175 (AVTISACVILLVGLVNYPVF). The Extracellular segment spans residues 176-198 (DMKVEKSFCFEPLRMNSKIAGYH). Residues 199 to 221 (YLRFTFGFAIPLGILAFTNHQIF) traverse the membrane as a helical segment. The Cytoplasmic portion of the chain corresponds to 222–241 (RSIKLSDSLSAAQKNKVKRS). Residues 242–261 (AIAVVTIFLVCFAPYHVVLL) form a helical membrane-spanning segment. Residues 262 to 286 (VKAASFSFYQGDMDAVCAFESRLYT) lie on the Extracellular side of the membrane. Residues 287–309 (VSMVFLCLSTVNSVADPIIYVLG) form a helical membrane-spanning segment. At 310–382 (TDHSRQEVSR…SPERLPEELC (73 aa)) the chain is on the cytoplasmic side.

The protein belongs to the G-protein coupled receptor 1 family. In terms of tissue distribution, highly expressed in hematopoietic tissues rich in lymphocytes like spleen and thymus. Weakly expressed in heart and lung. Highly expressed in infiltrating macrophages within atherosclerotic lesions.

Its subcellular location is the cell membrane. Functionally, may be a receptor for oxidized free fatty acids derived from linoleic and arachidonic acids such as 9-hydroxyoctadecadienoic acid (9-HODE). Activates a G alpha protein, most likely G alpha(q). May be involved in apoptosis. Functions at the G2/M checkpoint to delay mitosis. May function as a sensor that monitors the oxidative states and mediates appropriate cellular responses such as secretion of paracrine signals and attenuation of proliferation. May mediate ths accumulation of intracellular inositol phosphates at acidic pH through proton-sensing activity. This chain is Probable G-protein coupled receptor 132 (Gpr132), found in Mus musculus (Mouse).